Consider the following 651-residue polypeptide: Acetyl-coenzyme A synthetase (651 aa).

Residues 191–194 (RGGK), Thr-311, and Asn-335 each bind CoA. Residues 387-389 (GEP), 411-416 (DTWWQT), Asp-500, and Arg-515 each bind ATP. Ser-523 is a binding site for CoA. Arg-526 contacts ATP. Val-537, His-539, and Val-542 together coordinate Mg(2+). Position 584 (Arg-584) interacts with CoA. Lys-609 is subject to N6-acetyllysine.

This sequence belongs to the ATP-dependent AMP-binding enzyme family. The cofactor is Mg(2+). In terms of processing, acetylated. Deacetylation by the SIR2-homolog deacetylase activates the enzyme.

The catalysed reaction is acetate + ATP + CoA = acetyl-CoA + AMP + diphosphate. Its function is as follows. Catalyzes the conversion of acetate into acetyl-CoA (AcCoA), an essential intermediate at the junction of anabolic and catabolic pathways. AcsA undergoes a two-step reaction. In the first half reaction, AcsA combines acetate with ATP to form acetyl-adenylate (AcAMP) intermediate. In the second half reaction, it can then transfer the acetyl group from AcAMP to the sulfhydryl group of CoA, forming the product AcCoA. The sequence is that of Acetyl-coenzyme A synthetase from Pseudomonas savastanoi pv. phaseolicola (strain 1448A / Race 6) (Pseudomonas syringae pv. phaseolicola (strain 1448A / Race 6)).